We begin with the raw amino-acid sequence, 666 residues long: Zinc finger MYM-type protein 5 (666 aa).

Residues K85, K88, K146, and K163 each participate in a glycyl lysine isopeptide (Lys-Gly) (interchain with G-Cter in SUMO2) cross-link. The interval 87–106 (EKPQGNYSVIPPPSRDLASQ) is disordered. Residues 191-212 (SPDSWISQSASFPRNQKQPGVD) form a disordered region. Residues 194-208 (SWISQSASFPRNQKQ) show a composition bias toward polar residues. A Glycyl lysine isopeptide (Lys-Gly) (interchain with G-Cter in SUMO2) cross-link involves residue K222. 4 consecutive MYM-type zinc fingers follow at residues 262 to 296 (HLFC…KKAD), 308 to 348 (QEFC…RHEV), 355 to 390 (HKLC…KSTG), and 401 to 428 (KRFC…ASEN). Residues K440, K452, K459, and K549 each participate in a glycyl lysine isopeptide (Lys-Gly) (interchain with G-Cter in SUMO2) cross-link.

As to quaternary structure, interacts (via N-terminal 120 amino acid region) with ETV5 (via C-terminal).

The protein localises to the nucleus. In terms of biological role, functions as a transcriptional regulator. This is Zinc finger MYM-type protein 5 (ZMYM5) from Macaca fascicularis (Crab-eating macaque).